The sequence spans 308 residues: tRNA dimethylallyltransferase (308 aa).

ATP is bound at residue 14-21 (GPTASGKT). 16-21 (TASGKT) is a substrate binding site. 3 interaction with substrate tRNA regions span residues 39–42 (DSAL), 163–167 (QRLSR), and 244–249 (RCVGYR).

This sequence belongs to the IPP transferase family. In terms of assembly, monomer. Mg(2+) serves as cofactor.

The catalysed reaction is adenosine(37) in tRNA + dimethylallyl diphosphate = N(6)-dimethylallyladenosine(37) in tRNA + diphosphate. Functionally, catalyzes the transfer of a dimethylallyl group onto the adenine at position 37 in tRNAs that read codons beginning with uridine, leading to the formation of N6-(dimethylallyl)adenosine (i(6)A). This Shewanella baltica (strain OS223) protein is tRNA dimethylallyltransferase.